A 111-amino-acid chain; its full sequence is Large ribosomal subunit protein uL22 (111 aa).

Belongs to the universal ribosomal protein uL22 family. In terms of assembly, part of the 50S ribosomal subunit.

Functionally, this protein binds specifically to 23S rRNA; its binding is stimulated by other ribosomal proteins, e.g. L4, L17, and L20. It is important during the early stages of 50S assembly. It makes multiple contacts with different domains of the 23S rRNA in the assembled 50S subunit and ribosome. Its function is as follows. The globular domain of the protein is located near the polypeptide exit tunnel on the outside of the subunit, while an extended beta-hairpin is found that lines the wall of the exit tunnel in the center of the 70S ribosome. This Legionella pneumophila (strain Lens) protein is Large ribosomal subunit protein uL22.